The sequence spans 176 residues: Alkyl hydroperoxide reductase AhpD (176 aa).

Cysteine 131 functions as the Proton donor in the catalytic mechanism. A disulfide bond links cysteine 131 and cysteine 134. Catalysis depends on cysteine 134, which acts as the Cysteine sulfenic acid (-SOH) intermediate.

It belongs to the AhpD family.

It carries out the reaction N(6)-[(R)-dihydrolipoyl]-L-lysyl-[lipoyl-carrier protein] + a hydroperoxide = N(6)-[(R)-lipoyl]-L-lysyl-[lipoyl-carrier protein] + an alcohol + H2O. Its function is as follows. Antioxidant protein with alkyl hydroperoxidase activity. Required for the reduction of the AhpC active site cysteine residues and for the regeneration of the AhpC enzyme activity. This chain is Alkyl hydroperoxide reductase AhpD, found in Methylobacterium sp. (strain 4-46).